Reading from the N-terminus, the 201-residue chain is Recombination protein RecR (201 aa).

The C4-type zinc finger occupies 56 to 71 (CKICFNVSSDEVCQYC). A Toprim domain is found at 79–174 (SMICVVEESK…TVSRLASGLP (96 aa)).

It belongs to the RecR family.

In terms of biological role, may play a role in DNA repair. It seems to be involved in an RecBC-independent recombinational process of DNA repair. It may act with RecF and RecO. In Cutibacterium acnes (strain DSM 16379 / KPA171202) (Propionibacterium acnes), this protein is Recombination protein RecR.